Here is a 417-residue protein sequence, read N- to C-terminus: Serine hydroxymethyltransferase (417 aa).

Residues Leu-121 and 125-127 (GHL) each bind (6S)-5,6,7,8-tetrahydrofolate. Lys-229 carries the N6-(pyridoxal phosphate)lysine modification. 355–357 (SPF) serves as a coordination point for (6S)-5,6,7,8-tetrahydrofolate.

This sequence belongs to the SHMT family. Homodimer. It depends on pyridoxal 5'-phosphate as a cofactor.

Its subcellular location is the cytoplasm. The catalysed reaction is (6R)-5,10-methylene-5,6,7,8-tetrahydrofolate + glycine + H2O = (6S)-5,6,7,8-tetrahydrofolate + L-serine. The protein operates within one-carbon metabolism; tetrahydrofolate interconversion. Its pathway is amino-acid biosynthesis; glycine biosynthesis; glycine from L-serine: step 1/1. Its function is as follows. Catalyzes the reversible interconversion of serine and glycine with tetrahydrofolate (THF) serving as the one-carbon carrier. This reaction serves as the major source of one-carbon groups required for the biosynthesis of purines, thymidylate, methionine, and other important biomolecules. Also exhibits THF-independent aldolase activity toward beta-hydroxyamino acids, producing glycine and aldehydes, via a retro-aldol mechanism. This Buchnera aphidicola subsp. Acyrthosiphon pisum (strain 5A) protein is Serine hydroxymethyltransferase.